The sequence spans 1342 residues: DNA-directed RNA polymerase subunit beta (1342 aa).

An N6-acetyllysine mark is found at Lys1022 and Lys1200.

This sequence belongs to the RNA polymerase beta chain family. The RNAP catalytic core consists of 2 alpha, 1 beta, 1 beta' and 1 omega subunit. When a sigma factor is associated with the core the holoenzyme is formed, which can initiate transcription.

It carries out the reaction RNA(n) + a ribonucleoside 5'-triphosphate = RNA(n+1) + diphosphate. Its function is as follows. DNA-dependent RNA polymerase catalyzes the transcription of DNA into RNA using the four ribonucleoside triphosphates as substrates. This chain is DNA-directed RNA polymerase subunit beta, found in Escherichia coli O6:K15:H31 (strain 536 / UPEC).